The sequence spans 406 residues: Cysteine desulfurase (406 aa).

N6-(pyridoxal phosphate)lysine is present on Lys-226. Residue Cys-364 is the Cysteine persulfide intermediate of the active site.

The protein belongs to the class-V pyridoxal-phosphate-dependent aminotransferase family. Csd subfamily. Homodimer. Interacts with SufE and the SufBCD complex composed of SufB, SufC and SufD. The interaction with SufE is required to mediate the direct transfer of the sulfur atom from the S-sulfanylcysteine. It depends on pyridoxal 5'-phosphate as a cofactor.

It is found in the cytoplasm. It carries out the reaction (sulfur carrier)-H + L-cysteine = (sulfur carrier)-SH + L-alanine. It catalyses the reaction L-selenocysteine + AH2 = hydrogenselenide + L-alanine + A + H(+). It participates in cofactor biosynthesis; iron-sulfur cluster biosynthesis. Cysteine desulfurases mobilize the sulfur from L-cysteine to yield L-alanine, an essential step in sulfur metabolism for biosynthesis of a variety of sulfur-containing biomolecules. Component of the suf operon, which is activated and required under specific conditions such as oxidative stress and iron limitation. Acts as a potent selenocysteine lyase in vitro, that mobilizes selenium from L-selenocysteine. Selenocysteine lyase activity is however unsure in vivo. In Escherichia coli O127:H6 (strain E2348/69 / EPEC), this protein is Cysteine desulfurase.